Here is a 224-residue protein sequence, read N- to C-terminus: Small ribosomal subunit protein uS3c (224 aa).

The 82-residue stretch at 43–124 folds into the KH type-2 domain; sequence IKNYIQKNRK…RLNIAIEKVK (82 aa).

It belongs to the universal ribosomal protein uS3 family. In terms of assembly, part of the 30S ribosomal subunit.

It localises to the plastid. The protein localises to the chloroplast. This Saccharum hybrid (Sugarcane) protein is Small ribosomal subunit protein uS3c (rps3).